Reading from the N-terminus, the 151-residue chain is Flagellar assembly factor FliW 2 (151 aa).

This sequence belongs to the FliW family. As to quaternary structure, interacts with translational regulator CsrA and flagellin(s).

The protein localises to the cytoplasm. Acts as an anti-CsrA protein, binds CsrA and prevents it from repressing translation of its target genes, one of which is flagellin. Binds to flagellin and participates in the assembly of the flagellum. In Desulfotalea psychrophila (strain LSv54 / DSM 12343), this protein is Flagellar assembly factor FliW 2.